Here is a 116-residue protein sequence, read N- to C-terminus: Large ribosomal subunit protein bL17 (116 aa).

This sequence belongs to the bacterial ribosomal protein bL17 family. Part of the 50S ribosomal subunit. Contacts proteins L3 and L32.

Functionally, binds to the 23S rRNA. This is Large ribosomal subunit protein bL17 from Deinococcus radiodurans (strain ATCC 13939 / DSM 20539 / JCM 16871 / CCUG 27074 / LMG 4051 / NBRC 15346 / NCIMB 9279 / VKM B-1422 / R1).